The primary structure comprises 182 residues: GTP cyclohydrolase 1 (182 aa).

3 residues coordinate Zn(2+): cysteine 73, histidine 76, and cysteine 144.

The protein belongs to the GTP cyclohydrolase I family. Homomer.

It carries out the reaction GTP + H2O = 7,8-dihydroneopterin 3'-triphosphate + formate + H(+). It functions in the pathway cofactor biosynthesis; 7,8-dihydroneopterin triphosphate biosynthesis; 7,8-dihydroneopterin triphosphate from GTP: step 1/1. The sequence is that of GTP cyclohydrolase 1 from Hydrogenobaculum sp. (strain Y04AAS1).